Consider the following 74-residue polypeptide: Cytoplasmic envelopment protein 3 (74 aa).

Gly2 carries N-myristoyl glycine; by host lipidation. Positions 15 to 16 match the Di-leucine-like internalization motif motif; it reads LV. Residues 34–40 are asp/Glu-rich (acidic); that stretch reads SMEEFDI. The segment at 36-74 is disordered; the sequence is EEFDIPPPPPLPKPVFKQPGPYKIPARSQRCPSKRRDPY.

Belongs to the herpesviridae cytoplasmic envelopment protein 3 family. Interacts with cytoplasmic envelopment protein 2; this interaction is essential for the proper localization of each protein to the assembly complex and thus for the production of infectious virus. In terms of processing, myristoylation and palmitoylation (probably on one or more of the nearby cysteines at the N-terminus) enable membrane-binding and Golgi apparatus-specific targeting and are essential for efficient packaging. Post-translationally, phosphorylated. Phosphorylation does not seem to be required for recycling to the host Golgi apparatus. Packaging is selective for underphosphorylated forms.

It localises to the virion tegument. The protein localises to the virion membrane. Its subcellular location is the host cell membrane. It is found in the host Golgi apparatus membrane. Plays an important role in the cytoplasmic envelopment of tegument proteins and capsids during the assembly and egress processes. Also participates in viral entry at the fusion step probably by regulating the core fusion machinery. This chain is Cytoplasmic envelopment protein 3, found in Equine herpesvirus 1 (strain Ab4p) (EHV-1).